The sequence spans 612 residues: Dihydroxy-acid dehydratase (612 aa).

D81 contacts Mg(2+). C122 contributes to the [2Fe-2S] cluster binding site. D123 and K124 together coordinate Mg(2+). K124 is modified (N6-carboxylysine). C193 is a [2Fe-2S] cluster binding site. E489 serves as a coordination point for Mg(2+). S515 (proton acceptor) is an active-site residue.

This sequence belongs to the IlvD/Edd family. Homodimer. [2Fe-2S] cluster is required as a cofactor. It depends on Mg(2+) as a cofactor.

It catalyses the reaction (2R)-2,3-dihydroxy-3-methylbutanoate = 3-methyl-2-oxobutanoate + H2O. The enzyme catalyses (2R,3R)-2,3-dihydroxy-3-methylpentanoate = (S)-3-methyl-2-oxopentanoate + H2O. It participates in amino-acid biosynthesis; L-isoleucine biosynthesis; L-isoleucine from 2-oxobutanoate: step 3/4. The protein operates within amino-acid biosynthesis; L-valine biosynthesis; L-valine from pyruvate: step 3/4. In terms of biological role, functions in the biosynthesis of branched-chain amino acids. Catalyzes the dehydration of (2R,3R)-2,3-dihydroxy-3-methylpentanoate (2,3-dihydroxy-3-methylvalerate) into 2-oxo-3-methylpentanoate (2-oxo-3-methylvalerate) and of (2R)-2,3-dihydroxy-3-methylbutanoate (2,3-dihydroxyisovalerate) into 2-oxo-3-methylbutanoate (2-oxoisovalerate), the penultimate precursor to L-isoleucine and L-valine, respectively. The chain is Dihydroxy-acid dehydratase from Xanthomonas euvesicatoria pv. vesicatoria (strain 85-10) (Xanthomonas campestris pv. vesicatoria).